The sequence spans 193 residues: Thymidine kinase (193 aa).

ATP is bound by residues 16-23 (GPMFSGKS) and 89-92 (DEIQ). The Proton acceptor role is filled by E90. Residues C146, C149, C184, and C187 each coordinate Zn(2+).

This sequence belongs to the thymidine kinase family. In terms of assembly, homotetramer.

The protein resides in the cytoplasm. It carries out the reaction thymidine + ATP = dTMP + ADP + H(+). The protein is Thymidine kinase of Thermoanaerobacter pseudethanolicus (strain ATCC 33223 / 39E) (Clostridium thermohydrosulfuricum).